A 191-amino-acid chain; its full sequence is Amelogenin, X isoform (191 aa).

The first 16 residues, 1–16, serve as a signal peptide directing secretion; sequence MGTWILFACLLGAAFA. Position 32 is a phosphoserine (Ser32). A compositionally biased stretch (low complexity) spans 95–117; sequence IPQQPMMPVPGQHSMTPIQHHQP. A disordered region spans residues 95-191; it reads IPQQPMMPVP…TDKTKREEVD (97 aa). Pro residues predominate over residues 118 to 171; that stretch reads NLPPPAQQPYQPQPVQPQPHQPMQPQPPVHPMQPLPPQPPLPPMFPMQPLPPML.

It belongs to the amelogenin family. In terms of assembly, interacts with KRT5. Post-translationally, phosphorylated by FAM20C in vitro.

Its subcellular location is the secreted. It localises to the extracellular space. The protein resides in the extracellular matrix. In terms of biological role, plays a role in biomineralization. Seems to regulate the formation of crystallites during the secretory stage of tooth enamel development. Thought to play a major role in the structural organization and mineralization of developing enamel. This chain is Amelogenin, X isoform (AMELX), found in Homo sapiens (Human).